Here is a 62-residue protein sequence, read N- to C-terminus: Bowman-Birk type proteinase inhibitor B7 (62 aa).

5 disulfide bridges follow: Cys-5-Cys-59, Cys-6-Cys-23, Cys-13-Cys-21, Cys-30-Cys-37, and Cys-34-Cys-51.

The protein belongs to the Bowman-Birk serine protease inhibitor family. Expressed in bulb (at protein level).

Functionally, serine protease inhibitor. Inhibits trypsin (Ki = 65 nM) and weakly inhibits chymotrypsin (Ki = 295 nM). Does not inhibit bacterial subtilisin. The protein is Bowman-Birk type proteinase inhibitor B7 of Hyacinthus orientalis (Common hyacinth).